A 1127-amino-acid polypeptide reads, in one-letter code: Genome polyprotein (1127 aa).

The tract at residues 1–15 (MNNQRKKARSTPFNM) is interaction with host EXOC1. Topologically, residues 1 to 101 (MNNQRKKARS…LNILNRRRRT (101 aa)) are cytoplasmic. The hydrophobic; homodimerization of capsid protein C stretch occupies residues 37–72 (MLQGRGPLKLFMALVALPRFLTIPPTAGILKRWGTI). Positions 101–114 (TAGVIIMLIPTVMA) are cleaved as a propeptide — ER anchor for the capsid protein C, removed in mature form by serine protease NS3. A helical membrane pass occupies residues 102 to 122 (AGVIIMLIPTVMAFHLTTRNG). Residues 123–238 (EPHMIVSRQE…GAWKRACRME (116 aa)) lie on the Extracellular side of the membrane. Asn183 carries an N-linked (GlcNAc...) asparagine; by host glycan. Residues 239–259 (TWILRHPGFTIMAAILAYTIG) form a helical membrane-spanning segment. Residues 260–265 (TTHFQR) lie on the Cytoplasmic side of the membrane. The helical transmembrane segment at 266–280 (GLILILQTAVAPSMT) threads the bilayer. Residues 281–725 (MRCIGISNRD…LHQVFGAIYG (445 aa)) are Extracellular-facing. 4 disulfides stabilise this stretch: Cys283-Cys310, Cys340-Cys401, Cys354-Cys385, and Cys372-Cys396. N-linked (GlcNAc...) asparagine; by host glycosylation occurs at Asn347. The fusion peptide stretch occupies residues 378-391 (DRGWGNGCGLFGKG). N-linked (GlcNAc...) asparagine; by host glycosylation is present at Asn433. Intrachain disulfides connect Cys465–Cys565 and Cys582–Cys613. A helical membrane pass occupies residues 726-746 (AAFSGVSWTMKILIGVIITWI). The Cytoplasmic segment spans residues 747-754 (GMNSRSTS). The chain crosses the membrane as a helical span at residues 755–773 (LSVSLVLVGVITLYLGAMV). At 774–1127 (QADSGCVVSW…ENLVTSLVTA (354 aa)) the chain is on the extracellular side. 5 cysteine pairs are disulfide-bonded: Cys779–Cys790, Cys830–Cys918, Cys954–Cys998, Cys1055–Cys1104, and Cys1066–Cys1088. Residues Asn905 and Asn982 are each glycosylated (N-linked (GlcNAc...) asparagine; by host).

As to quaternary structure, homodimer. Interacts (via N-terminus) with host EXOC1 (via C-terminus); this interaction results in EXOC1 degradation through the proteasome degradation pathway. Forms heterodimers with envelope protein E in the endoplasmic reticulum and Golgi. In terms of assembly, homodimer; in the endoplasmic reticulum and Golgi. Interacts with protein prM. Interacts with non-structural protein 1. As to quaternary structure, homodimer; Homohexamer when secreted. Interacts with envelope protein E. In terms of processing, specific enzymatic cleavages in vivo yield mature proteins. Cleavages in the lumen of endoplasmic reticulum are performed by host signal peptidase, wereas cleavages in the cytoplasmic side are performed by the Serine protease NS3. Signal cleavage at the 2K-4B site requires a prior NS3 protease-mediated cleavage at the 4A-2K site. Post-translationally, cleaved in post-Golgi vesicles by a host furin, releasing the mature small envelope protein M, and peptide pr. This cleavage is incomplete as up to 30% of viral particles still carry uncleaved prM. N-glycosylated. In terms of processing, N-glycosylated. The excreted form is glycosylated and this is required for efficient secretion of the protein from infected cells.

The protein resides in the virion. Its subcellular location is the host nucleus. It is found in the host cytoplasm. The protein localises to the host perinuclear region. It localises to the secreted. The protein resides in the virion membrane. Its subcellular location is the host endoplasmic reticulum membrane. Functionally, plays a role in virus budding by binding to the cell membrane and gathering the viral RNA into a nucleocapsid that forms the core of a mature virus particle. During virus entry, may induce genome penetration into the host cytoplasm after hemifusion induced by the surface proteins. Can migrate to the cell nucleus where it modulates host functions. Overcomes the anti-viral effects of host EXOC1 by sequestering and degrading the latter through the proteasome degradation pathway. In terms of biological role, inhibits RNA silencing by interfering with host Dicer. Prevents premature fusion activity of envelope proteins in trans-Golgi by binding to envelope protein E at pH6.0. After virion release in extracellular space, gets dissociated from E dimers. Its function is as follows. Acts as a chaperone for envelope protein E during intracellular virion assembly by masking and inactivating envelope protein E fusion peptide. prM is the only viral peptide matured by host furin in the trans-Golgi network probably to avoid catastrophic activation of the viral fusion activity in acidic GolGi compartment prior to virion release. prM-E cleavage is inefficient, and many virions are only partially matured. These uncleaved prM would play a role in immune evasion. Functionally, may play a role in virus budding. Exerts cytotoxic effects by activating a mitochondrial apoptotic pathway through M ectodomain. May display a viroporin activity. In terms of biological role, binds to host cell surface receptor and mediates fusion between viral and cellular membranes. Envelope protein is synthesized in the endoplasmic reticulum in the form of heterodimer with protein prM. They play a role in virion budding in the ER, and the newly formed immature particle is covered with 60 spikes composed of heterodimer between precursor prM and envelope protein E. The virion is transported to the Golgi apparatus where the low pH causes dissociation of PrM-E heterodimers and formation of E homodimers. prM-E cleavage is inefficient, and many virions are only partially matured. These uncleaved prM would play a role in immune evasion. Involved in immune evasion, pathogenesis and viral replication. Once cleaved off the polyprotein, is targeted to three destinations: the viral replication cycle, the plasma membrane and the extracellular compartment. Essential for viral replication. Required for formation of the replication complex and recruitment of other non-structural proteins to the ER-derived membrane structures. Excreted as a hexameric lipoparticle that plays a role against host immune response. Antagonizing the complement function. Binds to the host macrophages and dendritic cells. Inhibits signal transduction originating from Toll-like receptor 3 (TLR3). Its function is as follows. Disrupts the host endothelial glycocalyx layer of host pulmonary microvascular endothelial cells, inducing degradation of sialic acid and shedding of heparan sulfate proteoglycans. NS1 induces expression of sialidases, heparanase, and activates cathepsin L, which activates heparanase via enzymatic cleavage. These effects are probably linked to the endothelial hyperpermeability observed in severe dengue disease. The protein is Genome polyprotein of Dengue virus type 2 (strain China/D2-04) (DENV-2).